Consider the following 359-residue polypeptide: Probable deacetylase AF_0130 (359 aa).

The active-site Proton donor/acceptor is His126. Residues Asp162, His164, and Asp249 each contribute to the Zn(2+) site.

Belongs to the histone deacetylase family. It depends on Zn(2+) as a cofactor.

Probable deacetylase. This chain is Probable deacetylase AF_0130, found in Archaeoglobus fulgidus (strain ATCC 49558 / DSM 4304 / JCM 9628 / NBRC 100126 / VC-16).